The sequence spans 455 residues: Bifunctional protein GlmU (455 aa).

A pyrophosphorylase region spans residues 1–232 (MASITGALIL…DPNLLGVNDP (232 aa)). UDP-N-acetyl-alpha-D-glucosamine-binding positions include 10 to 13 (LAAG), lysine 24, glutamine 75, and 80 to 81 (GT). Mg(2+) is bound at residue aspartate 106. The UDP-N-acetyl-alpha-D-glucosamine site is built by glycine 141, glutamate 155, asparagine 172, and asparagine 230. A Mg(2+)-binding site is contributed by asparagine 230. The segment at 233–253 (AELIRSEALVRARIALNWIEK) is linker. The interval 254-455 (RVLIHAPETV…QTTLPRRRNS (202 aa)) is N-acetyltransferase. Residues arginine 336 and lysine 354 each contribute to the UDP-N-acetyl-alpha-D-glucosamine site. Histidine 366 (proton acceptor) is an active-site residue. 2 residues coordinate UDP-N-acetyl-alpha-D-glucosamine: tyrosine 369 and asparagine 380. Acetyl-CoA-binding positions include alanine 383, 389–390 (NY), serine 408, alanine 426, and arginine 443.

This sequence in the N-terminal section; belongs to the N-acetylglucosamine-1-phosphate uridyltransferase family. In the C-terminal section; belongs to the transferase hexapeptide repeat family. Homotrimer. The cofactor is Mg(2+).

It is found in the cytoplasm. The catalysed reaction is alpha-D-glucosamine 1-phosphate + acetyl-CoA = N-acetyl-alpha-D-glucosamine 1-phosphate + CoA + H(+). The enzyme catalyses N-acetyl-alpha-D-glucosamine 1-phosphate + UTP + H(+) = UDP-N-acetyl-alpha-D-glucosamine + diphosphate. Its pathway is nucleotide-sugar biosynthesis; UDP-N-acetyl-alpha-D-glucosamine biosynthesis; N-acetyl-alpha-D-glucosamine 1-phosphate from alpha-D-glucosamine 6-phosphate (route II): step 2/2. The protein operates within nucleotide-sugar biosynthesis; UDP-N-acetyl-alpha-D-glucosamine biosynthesis; UDP-N-acetyl-alpha-D-glucosamine from N-acetyl-alpha-D-glucosamine 1-phosphate: step 1/1. It functions in the pathway bacterial outer membrane biogenesis; LPS lipid A biosynthesis. Catalyzes the last two sequential reactions in the de novo biosynthetic pathway for UDP-N-acetylglucosamine (UDP-GlcNAc). The C-terminal domain catalyzes the transfer of acetyl group from acetyl coenzyme A to glucosamine-1-phosphate (GlcN-1-P) to produce N-acetylglucosamine-1-phosphate (GlcNAc-1-P), which is converted into UDP-GlcNAc by the transfer of uridine 5-monophosphate (from uridine 5-triphosphate), a reaction catalyzed by the N-terminal domain. The polypeptide is Bifunctional protein GlmU (Nitratidesulfovibrio vulgaris (strain DSM 19637 / Miyazaki F) (Desulfovibrio vulgaris)).